Here is a 375-residue protein sequence, read N- to C-terminus: Protein RecA (375 aa).

Residue 75–82 (GPESSGKT) coordinates ATP. Residues 339–375 (GPYAKMKDEQTEEAAGDQMDEDKPIDLSPNFDDDDAN) are disordered. The span at 348–358 (QTEEAAGDQMD) shows a compositional bias: acidic residues.

The protein belongs to the RecA family.

It is found in the cytoplasm. Can catalyze the hydrolysis of ATP in the presence of single-stranded DNA, the ATP-dependent uptake of single-stranded DNA by duplex DNA, and the ATP-dependent hybridization of homologous single-stranded DNAs. It interacts with LexA causing its activation and leading to its autocatalytic cleavage. The protein is Protein RecA of Corynebacterium jeikeium (strain K411).